The chain runs to 192 residues: GTP cyclohydrolase-2 (192 aa).

Residue Arg-50 to Glu-54 coordinates GTP. Residues Cys-55, Cys-66, and Cys-68 each coordinate Zn(2+). GTP is bound by residues Glu-92–Arg-94 and Thr-114. Asp-126 functions as the Proton acceptor in the catalytic mechanism. Catalysis depends on Arg-128, which acts as the Nucleophile. Thr-149 and Lys-154 together coordinate GTP.

It belongs to the GTP cyclohydrolase II family. Zn(2+) is required as a cofactor.

It catalyses the reaction GTP + 4 H2O = 2,5-diamino-6-hydroxy-4-(5-phosphoribosylamino)-pyrimidine + formate + 2 phosphate + 3 H(+). Its pathway is cofactor biosynthesis; riboflavin biosynthesis; 5-amino-6-(D-ribitylamino)uracil from GTP: step 1/4. In terms of biological role, catalyzes the conversion of GTP to 2,5-diamino-6-ribosylamino-4(3H)-pyrimidinone 5'-phosphate (DARP), formate and pyrophosphate. This Helicobacter acinonychis (strain Sheeba) protein is GTP cyclohydrolase-2.